A 410-amino-acid chain; its full sequence is Cathepsin D (410 aa).

An N-terminal signal peptide occupies residues 1 to 20 (MKTPGVLLLILGLLASSSFA). Positions 21-64 (IIRIPLRKFTSIRRTMTEVGGSVEDLILKGPITKYSMQSSPKTT) are cleaved as a propeptide — activation peptide. Residues 79 to 405 (YYGDIGIGTP…DRDNNRVGFA (327 aa)) enclose the Peptidase A1 domain. 2 cysteine pairs are disulfide-bonded: C91/C160 and C110/C117. D97 is a catalytic residue. N-linked (GlcNAc...) asparagine glycosylation is present at N134. The N-linked (GlcNAc...) (high mannose) asparagine glycan is linked to N261. Cysteines 284 and 288 form a disulfide. Residue D293 is part of the active site. An intrachain disulfide couples C327 to C364.

This sequence belongs to the peptidase A1 family. Consists of a light chain and a heavy chain. Interacts with ADAM30; this leads to activation of CTSD. Interacts with GRN; stabilizes CTSD; increases its proteolytic activity. N- and O-glycosylated. In terms of processing, undergoes proteolytic cleavage and activation by ADAM30.

The protein localises to the lysosome. It localises to the melanosome. The protein resides in the secreted. It is found in the extracellular space. It catalyses the reaction Specificity similar to, but narrower than, that of pepsin A. Does not cleave the 4-Gln-|-His-5 bond in B chain of insulin.. Acid protease active in intracellular protein breakdown. Plays a role in APP processing following cleavage and activation by ADAM30 which leads to APP degradation. This chain is Cathepsin D (Ctsd), found in Mus musculus (Mouse).